Reading from the N-terminus, the 270-residue chain is Sulfur carrier protein FdhD (270 aa).

The Cysteine persulfide intermediate role is filled by Cys-116. 253–258 (FAREGK) provides a ligand contact to Mo-bis(molybdopterin guanine dinucleotide).

The protein belongs to the FdhD family.

The protein localises to the cytoplasm. Its function is as follows. Required for formate dehydrogenase (FDH) activity. Acts as a sulfur carrier protein that transfers sulfur from IscS to the molybdenum cofactor prior to its insertion into FDH. The polypeptide is Sulfur carrier protein FdhD (Haemophilus influenzae (strain 86-028NP)).